Reading from the N-terminus, the 393-residue chain is Riboflavin biosynthesis protein RibBA (393 aa).

The interval 1 to 200 (MQFDNIDSAL…IDDLIEYRKK (200 aa)) is DHBP synthase. Residues 27-28 (RE), Asp32, 139-143 (RNGHT), and Glu163 contribute to the D-ribulose 5-phosphate site. Glu28 lines the Mg(2+) pocket. His142 is a Mg(2+) binding site. The interval 201–393 (LEPEIEFKAK…TKKIKMGHLI (193 aa)) is GTP cyclohydrolase II. 249-253 (RLHSA) serves as a coordination point for GTP. 3 residues coordinate Zn(2+): Cys254, Cys265, and Cys267. Residues Gln270, 291 to 293 (EGR), and Thr313 each bind GTP. Residue Asp325 is the Proton acceptor; for GTP cyclohydrolase activity of the active site. Arg327 serves as the catalytic Nucleophile; for GTP cyclohydrolase activity. GTP is bound by residues Ser348 and Lys353.

This sequence in the N-terminal section; belongs to the DHBP synthase family. In the C-terminal section; belongs to the GTP cyclohydrolase II family. Mg(2+) serves as cofactor. The cofactor is Mn(2+). Zn(2+) is required as a cofactor.

It catalyses the reaction D-ribulose 5-phosphate = (2S)-2-hydroxy-3-oxobutyl phosphate + formate + H(+). The catalysed reaction is GTP + 4 H2O = 2,5-diamino-6-hydroxy-4-(5-phosphoribosylamino)-pyrimidine + formate + 2 phosphate + 3 H(+). It participates in cofactor biosynthesis; riboflavin biosynthesis; 2-hydroxy-3-oxobutyl phosphate from D-ribulose 5-phosphate: step 1/1. It functions in the pathway cofactor biosynthesis; riboflavin biosynthesis; 5-amino-6-(D-ribitylamino)uracil from GTP: step 1/4. In terms of biological role, catalyzes the conversion of D-ribulose 5-phosphate to formate and 3,4-dihydroxy-2-butanone 4-phosphate. Catalyzes the conversion of GTP to 2,5-diamino-6-ribosylamino-4(3H)-pyrimidinone 5'-phosphate (DARP), formate and pyrophosphate. The protein is Riboflavin biosynthesis protein RibBA of Staphylococcus aureus (strain MSSA476).